Here is a 363-residue protein sequence, read N- to C-terminus: Aminomethyltransferase (363 aa).

This sequence belongs to the GcvT family. In terms of assembly, the glycine cleavage system is composed of four proteins: P, T, L and H.

The catalysed reaction is N(6)-[(R)-S(8)-aminomethyldihydrolipoyl]-L-lysyl-[protein] + (6S)-5,6,7,8-tetrahydrofolate = N(6)-[(R)-dihydrolipoyl]-L-lysyl-[protein] + (6R)-5,10-methylene-5,6,7,8-tetrahydrofolate + NH4(+). Its function is as follows. The glycine cleavage system catalyzes the degradation of glycine. This chain is Aminomethyltransferase, found in Staphylococcus aureus (strain MRSA252).